The sequence spans 94 residues: Putative septation protein SpoVG (94 aa).

This sequence belongs to the SpoVG family.

Its function is as follows. Could be involved in septation. This is Putative septation protein SpoVG from Acetivibrio thermocellus (strain ATCC 27405 / DSM 1237 / JCM 9322 / NBRC 103400 / NCIMB 10682 / NRRL B-4536 / VPI 7372) (Clostridium thermocellum).